The chain runs to 125 residues: Aspartate 1-decarboxylase 2 (125 aa).

The active-site Schiff-base intermediate with substrate; via pyruvic acid is the Ser25. Ser25 bears the Pyruvic acid (Ser) mark. Thr57 provides a ligand contact to substrate. The active-site Proton donor is Tyr58. 73–75 is a binding site for substrate; sequence GAA.

This sequence belongs to the PanD family. As to quaternary structure, heterooctamer of four alpha and four beta subunits. Pyruvate is required as a cofactor. Post-translationally, is synthesized initially as an inactive proenzyme, which is activated by self-cleavage at a specific serine bond to produce a beta-subunit with a hydroxyl group at its C-terminus and an alpha-subunit with a pyruvoyl group at its N-terminus.

It is found in the cytoplasm. It catalyses the reaction L-aspartate + H(+) = beta-alanine + CO2. It participates in cofactor biosynthesis; (R)-pantothenate biosynthesis; beta-alanine from L-aspartate: step 1/1. Functionally, catalyzes the pyruvoyl-dependent decarboxylation of aspartate to produce beta-alanine. The sequence is that of Aspartate 1-decarboxylase 2 from Gloeobacter violaceus (strain ATCC 29082 / PCC 7421).